A 467-amino-acid chain; its full sequence is Sugar transporter ERD6-like 11 (467 aa).

Transmembrane regions (helical) follow at residues 26 to 46 (ITAC…SYGC), 75 to 95 (FLNV…VILG), 105 to 125 (FFCV…WLDL), 128 to 148 (ISLG…IAEI), 155 to 177 (GAFT…FFGT), 183 to 203 (VMAV…FFIP), 266 to 286 (LVVG…GITY), 301 to 321 (LGSM…LILV), 328 to 348 (PLLL…GVSF), 359 to 379 (LIPI…AFGI), 402 to 422 (IVAL…NFMF), and 428 to 448 (GTFY…WMLV).

This sequence belongs to the major facilitator superfamily. Sugar transporter (TC 2.A.1.1) family.

The protein localises to the membrane. Its function is as follows. Sugar transporter. The protein is Sugar transporter ERD6-like 11 of Arabidopsis thaliana (Mouse-ear cress).